The following is an 89-amino-acid chain: Small ribosomal subunit protein uS17 (89 aa).

This sequence belongs to the universal ribosomal protein uS17 family. In terms of assembly, part of the 30S ribosomal subunit.

Its function is as follows. One of the primary rRNA binding proteins, it binds specifically to the 5'-end of 16S ribosomal RNA. This Lactiplantibacillus plantarum (strain ATCC BAA-793 / NCIMB 8826 / WCFS1) (Lactobacillus plantarum) protein is Small ribosomal subunit protein uS17.